The following is a 160-amino-acid chain: 2-C-methyl-D-erythritol 2,4-cyclodiphosphate synthase (160 aa).

A divalent metal cation is bound by residues Asp-11 and His-13. 4-CDP-2-C-methyl-D-erythritol 2-phosphate-binding positions include 11–13 (DIH) and 37–38 (HS). His-45 is an a divalent metal cation binding site. 4-CDP-2-C-methyl-D-erythritol 2-phosphate-binding positions include 59–61 (DIG), 135–138 (TTNE), and Arg-145.

The protein belongs to the IspF family. In terms of assembly, homotrimer. It depends on a divalent metal cation as a cofactor.

It carries out the reaction 4-CDP-2-C-methyl-D-erythritol 2-phosphate = 2-C-methyl-D-erythritol 2,4-cyclic diphosphate + CMP. It functions in the pathway isoprenoid biosynthesis; isopentenyl diphosphate biosynthesis via DXP pathway; isopentenyl diphosphate from 1-deoxy-D-xylulose 5-phosphate: step 4/6. Its function is as follows. Involved in the biosynthesis of isopentenyl diphosphate (IPP) and dimethylallyl diphosphate (DMAPP), two major building blocks of isoprenoid compounds. Catalyzes the conversion of 4-diphosphocytidyl-2-C-methyl-D-erythritol 2-phosphate (CDP-ME2P) to 2-C-methyl-D-erythritol 2,4-cyclodiphosphate (ME-CPP) with a corresponding release of cytidine 5-monophosphate (CMP). The sequence is that of 2-C-methyl-D-erythritol 2,4-cyclodiphosphate synthase from Synechococcus elongatus (strain ATCC 33912 / PCC 7942 / FACHB-805) (Anacystis nidulans R2).